A 639-amino-acid polypeptide reads, in one-letter code: MGRIIGIDLGTTNSCVAVLDGDKPRVIENAEGERTTASVVAYTQDGETLVGQPAKRQAVTNPENTLYAIKRLIGRRFEDEEVQRDLKIMPFKIVKADNGDAWVEAKGQKMAAPQVSAEILKKMKKTAEDFLGEEVTAAVITVPAYFNDAQRQATKDAGRIAGLEVKRIINEPTAAALAYGLDKKGGDRTIAVYDLGGGTFDISIIEIDEVEGEKTFEVLSTNGDTHLGGEDFDNRLINYLVEEFKKEQGMDLRNDPLAMQRLKEAAEKAKIELSSAQQTDVNLPYITADATGPKHMNIKVTRAKLESLVEDLVQRSLEPLKVALSDAGLSVSEITDIIVVGGQTRMPMVQAKVAEFFGKEPRKDVNPDEAVAVGAAVQAGVLAGDVKDVLLLDVTPLSLGIETMGGVMTKLIEKNTTIPTKANQVFSTAEDNQSAVTIHVLQGERKQSSYNKSLGQFNLEGIQAAARGMPQIEVTFDLDADGILHVSAKDKSTGKEQKITIQSSSGLSEEDIEKMVQEAEANKESDKKFEELVTARNQADQLIHGTRKQVEEAGEALPAEDKEKIEAAVSELEEARKAEDKEAIDAKVQALVAASQKLMEIAQQQAQAQQAPGGEGEQEAKQDDNVVDAEFEEVKDEKK.

Phosphothreonine; by autocatalysis is present on T199. Residues Q603 to P612 are compositionally biased toward low complexity. The disordered stretch occupies residues Q603–K639. Positions N625–K639 are enriched in acidic residues.

This sequence belongs to the heat shock protein 70 family.

Its function is as follows. Acts as a chaperone. The protein is Chaperone protein DnaK 1 of Photobacterium profundum (strain SS9).